A 350-amino-acid chain; its full sequence is Induced myeloid leukemia cell differentiation protein Mcl-1 homolog (350 aa).

Glycyl lysine isopeptide (Lys-Gly) (interchain with G-Cter in ubiquitin) cross-links involve residues lysine 5 and lysine 40. The segment at cysteine 104–phenylalanine 175 is PEST-like. The residue at position 121 (serine 121) is a Phosphoserine. Lysine 136 participates in a covalent cross-link: Glycyl lysine isopeptide (Lys-Gly) (interchain with G-Cter in ubiquitin). The interval glycine 148 to glutamate 170 is disordered. Serine 159 is modified (phosphoserine; by GSK3-alpha and GSK3-beta). Position 162 is a phosphoserine (serine 162). Position 163 is a phosphothreonine; by MAPK (threonine 163). Residues lysine 194 and lysine 197 each participate in a glycyl lysine isopeptide (Lys-Gly) (interchain with G-Cter in ubiquitin) cross-link. The BH3 motif lies at alanine 209–asparagine 223. The BH1 motif lies at histidine 252–alanine 272. The short motif at aspartate 304 to phenylalanine 319 is the BH2 element. Residues isoleucine 328 to leucine 348 form a helical membrane-spanning segment.

Belongs to the Bcl-2 family. In terms of assembly, interacts with HIF3A (via C-terminus domain). Interacts with BOK, BIK, BAX, BAK1, and TPT1. Interacts with unphosphorylated BAD. Interacts with BMF, BBC3 and PMAIP1. Interacts with BOP. Interacts with BCL2L11; may sequester BCL2L11 to prevent its pro-apoptotic activity. Interacts with GIMAP5 and HSPA8/HSC70; the interaction between HSPA8 and MCL1 is impaired in the absence of GIMAP5. In terms of processing, cleaved by CASP3 during apoptosis, yielding a pro-apoptotic C-terminal fragment. Rapidly degraded in the absence of phosphorylation in the PEST region. Post-translationally, phosphorylated on Ser-159, by GSK3, in response to IL3/interleukin-3 withdrawal. Phosphorylation at Ser-159 induces ubiquitination and proteasomal degradation, abrogating the anti-apoptotic activity. Treatment with taxol or okadaic acid induces phosphorylation on additional sites. In terms of processing, ubiquitinated. Ubiquitination is induced by phosphorylation at Ser-159. Deubiquitinated by USP20; leading to increased stability.

It is found in the membrane. The protein localises to the cytoplasm. It localises to the mitochondrion. The protein resides in the nucleus. Its subcellular location is the nucleoplasm. Involved in the regulation of apoptosis versus cell survival, and in the maintenance of viability but not of proliferation. Mediates its effects by interactions with a number of other regulators of apoptosis. The chain is Induced myeloid leukemia cell differentiation protein Mcl-1 homolog (MCL1) from Felis catus (Cat).